Consider the following 1413-residue polypeptide: DNA-directed RNA polymerase subunit beta' (1413 aa).

4 residues coordinate Zn(2+): cysteine 72, cysteine 74, cysteine 87, and cysteine 90. Residues aspartate 463, aspartate 465, and aspartate 467 each contribute to the Mg(2+) site. Residues cysteine 811, cysteine 885, cysteine 892, and cysteine 895 each coordinate Zn(2+).

The protein belongs to the RNA polymerase beta' chain family. As to quaternary structure, the RNAP catalytic core consists of 2 alpha, 1 beta, 1 beta' and 1 omega subunit. When a sigma factor is associated with the core the holoenzyme is formed, which can initiate transcription. It depends on Mg(2+) as a cofactor. The cofactor is Zn(2+).

It carries out the reaction RNA(n) + a ribonucleoside 5'-triphosphate = RNA(n+1) + diphosphate. DNA-dependent RNA polymerase catalyzes the transcription of DNA into RNA using the four ribonucleoside triphosphates as substrates. The sequence is that of DNA-directed RNA polymerase subunit beta' from Ruegeria pomeroyi (strain ATCC 700808 / DSM 15171 / DSS-3) (Silicibacter pomeroyi).